Reading from the N-terminus, the 148-residue chain is uncharacterized protein (148 aa).

Residues 1-108 form a disordered region; the sequence is MGRAGPRSTA…PSRLRGKRSL (108 aa). A compositionally biased stretch (basic residues) spans 22-42; the sequence is RRPRPWQKPTSPRRLHRRRPR. Positions 88–97 are enriched in polar residues; it reads DTSASNPSQR.

This is an uncharacterized protein from Homo sapiens (Human).